A 234-amino-acid chain; its full sequence is Phosphoribosylaminoimidazole-succinocarboxamide synthase (234 aa).

Belongs to the SAICAR synthetase family.

It catalyses the reaction 5-amino-1-(5-phospho-D-ribosyl)imidazole-4-carboxylate + L-aspartate + ATP = (2S)-2-[5-amino-1-(5-phospho-beta-D-ribosyl)imidazole-4-carboxamido]succinate + ADP + phosphate + 2 H(+). It participates in purine metabolism; IMP biosynthesis via de novo pathway; 5-amino-1-(5-phospho-D-ribosyl)imidazole-4-carboxamide from 5-amino-1-(5-phospho-D-ribosyl)imidazole-4-carboxylate: step 1/2. This chain is Phosphoribosylaminoimidazole-succinocarboxamide synthase, found in Streptococcus agalactiae serotype III (strain NEM316).